A 750-amino-acid polypeptide reads, in one-letter code: Photosystem I P700 chlorophyll a apoprotein A1 (750 aa).

8 consecutive transmembrane segments (helical) span residues 70–93 (IFSA…FHGA), 156–179 (LYCT…FHYH), 195–219 (LNHH…HVSL), 291–309 (TAHH…GHMY), 346–369 (WHAQ…HHMY), 385–411 (LSLF…IFMV), 433–455 (AIIS…LYIH), and 531–549 (FLVH…LILL). [4Fe-4S] cluster contacts are provided by Cys573 and Cys582. 2 consecutive transmembrane segments (helical) span residues 589–610 (HVFL…HFSW) and 664–686 (LSAY…MFLF). A chlorophyll a'-binding site is contributed by His675. Chlorophyll a is bound by residues Met683 and Tyr691. Residue Trp692 participates in phylloquinone binding. Residues 724-744 (AVGVTHYLLGGIATTWAFFLA) form a helical membrane-spanning segment.

It belongs to the PsaA/PsaB family. As to quaternary structure, the PsaA/B heterodimer binds the P700 chlorophyll special pair and subsequent electron acceptors. PSI consists of a core antenna complex that captures photons, and an electron transfer chain that converts photonic excitation into a charge separation. The eukaryotic PSI reaction center is composed of at least 11 subunits. The cofactor is P700 is a chlorophyll a/chlorophyll a' dimer, A0 is one or more chlorophyll a, A1 is one or both phylloquinones and FX is a shared 4Fe-4S iron-sulfur center..

It localises to the plastid. The protein resides in the chloroplast thylakoid membrane. The catalysed reaction is reduced [plastocyanin] + hnu + oxidized [2Fe-2S]-[ferredoxin] = oxidized [plastocyanin] + reduced [2Fe-2S]-[ferredoxin]. Functionally, psaA and PsaB bind P700, the primary electron donor of photosystem I (PSI), as well as the electron acceptors A0, A1 and FX. PSI is a plastocyanin-ferredoxin oxidoreductase, converting photonic excitation into a charge separation, which transfers an electron from the donor P700 chlorophyll pair to the spectroscopically characterized acceptors A0, A1, FX, FA and FB in turn. Oxidized P700 is reduced on the lumenal side of the thylakoid membrane by plastocyanin. This Spinacia oleracea (Spinach) protein is Photosystem I P700 chlorophyll a apoprotein A1.